Reading from the N-terminus, the 1105-residue chain is Ran-binding protein 6 (1105 aa).

Ala-2 is modified (N-acetylalanine). HEAT repeat units follow at residues 219–257 (FKDF…TVPK), 361–399 (KVVL…GCHQ), 402–440 (ESIL…DFAP), and 444–483 (KKFH…DCPK). The interval 333-383 (DEMEEDDFDSNAVAAESALDRLACGLGGKVVLPMTKEHIMQMLQSPDWKYR) is ran-GTP binding. Residues 806–842 (KAKLEGHFKNQELRQVKRQEENYDQQVEMSLQDEDEC) are a coiled coil. 3 HEAT repeats span residues 866-905 (LPWF…HCSP), 908-946 (FKYV…FGGD), and 949-987 (RSLC…IGKI).

The protein belongs to the importin beta family.

It is found in the cytoplasm. The protein resides in the nucleus. May function in nuclear protein import as nuclear transport receptor. In Homo sapiens (Human), this protein is Ran-binding protein 6 (RANBP6).